The sequence spans 167 residues: UPF0114 protein in repA1-repA2 intergenic region (167 aa).

The next 3 membrane-spanning stretches (helical) occupy residues 15 to 35, 53 to 73, and 136 to 156; these read LMFP…LKFF, LVLA…LVMV, and IMLC…MAYI.

It belongs to the UPF0114 family.

It is found in the cell membrane. This chain is UPF0114 protein in repA1-repA2 intergenic region, found in Buchnera aphidicola subsp. Schizaphis graminum (strain Sg).